Consider the following 65-residue polypeptide: MKEGIHPKYNDVMVKCACGNSFQTRSTKTEISTEICSACHPFFTGKQKLIDTAGRVERFRKKYGM.

Cys16, Cys18, Cys36, and Cys39 together coordinate Zn(2+).

This sequence belongs to the bacterial ribosomal protein bL31 family. Type A subfamily. Part of the 50S ribosomal subunit. Requires Zn(2+) as cofactor.

Functionally, binds the 23S rRNA. This Geobacter sulfurreducens (strain ATCC 51573 / DSM 12127 / PCA) protein is Large ribosomal subunit protein bL31.